Reading from the N-terminus, the 467-residue chain is Glutamate--tRNA ligase (467 aa).

The 'HIGH' region signature appears at 14–24 (PSPTGFLHLGG). A compositionally biased stretch (basic and acidic residues) spans 124–134 (PRYDGTWRPEP). Residues 124–156 (PRYDGTWRPEPGKTLPPVPAGRKPVVRFKNPQD) are disordered. The short motif at 246 to 250 (KLSKR) is the 'KMSKS' region element. Lysine 249 contacts ATP.

It belongs to the class-I aminoacyl-tRNA synthetase family. Glutamate--tRNA ligase type 1 subfamily. Monomer.

The protein localises to the cytoplasm. It carries out the reaction tRNA(Glu) + L-glutamate + ATP = L-glutamyl-tRNA(Glu) + AMP + diphosphate. Functionally, catalyzes the attachment of glutamate to tRNA(Glu) in a two-step reaction: glutamate is first activated by ATP to form Glu-AMP and then transferred to the acceptor end of tRNA(Glu). In Bordetella petrii (strain ATCC BAA-461 / DSM 12804 / CCUG 43448), this protein is Glutamate--tRNA ligase.